The following is a 782-amino-acid chain: Shutoff protein (782 aa).

Residues 262–329 form a binding to host EIF4G region; sequence VMNQLLIKRA…AVLVTVELEC (68 aa). The 119-residue stretch at 332–450 folds into the RRM domain; the sequence is RFFSDITTLR…SLWTGFDERT (119 aa). Phosphotyrosine; by host occurs at positions 349 and 665. The disordered stretch occupies residues 715–760; it reads GGRILGESGRGRGRGLGRMGGGGGGQPRRGSRGGGGRFQGRSDRRQ. Over residues 728-752 the composition is skewed to gly residues; sequence RGLGRMGGGGGGQPRRGSRGGGGRF.

Belongs to the adenoviridae shutoff protein family. As to quaternary structure, monomer. Interacts with hexon protein; this interaction allows chaperoning and trimerization of hexon proteins. Interacts (via N-terminus) with host initiation factor EIF4G (via C-terminus). Interacts (via RRM domain) with viral mRNAs that contain the tripartite leader; this interaction allows ribosome shunting and expression of viral late mRNAs. Post-translationally, might be cleaved by the viral protease. Phosphorylated. Tyrosine phosphorylation enhances preferential binding to tripartite leader mRNAs and allows ribosome shunting. In terms of processing, methylated. Asymmetric dimethylation by host PRMT1 of the Arg/Gly-rich region may regulate shutoff protein binding to hexon and promote the capsid assembly in the nucleus.

It is found in the host cytoplasm. Protein that inhibits host translation while promoting late viral translation by ribosome shunting. Blocks host cap-dependent translation by binding to eIF4G, displacing MKNK1 from cap initiation complexes and preventing EIF4E phosphorylation. Binds to the tripartite leader sequence of viral late mRNAs and recruits host eIF4G, PABPC1/poly-A binding protein and 40S ribosomes subunits on viral mRNAs, allowing ribosome shunting and efficient translation of late viral mRNAs even though conventional translation via ribosome scanning from the cap has been shut off in the host cell. During assembly, acts as a chaperone protein that helps hexon proteins assembly into trimers. In Human adenovirus A serotype 12 (HAdV-12), this protein is Shutoff protein.